The chain runs to 120 residues: Flagellar protein FliT (120 aa).

The interval 1–50 is required for homodimerization; it reads MERHQHLLSEYQQILTLSEQMLMLATVENWDALVDLEMAYLKAVENTANI. A fliD binding region spans residues 60-98; sequence LQELLRQKLRSILENEIEIKRLLQRRLDKLSELVGQSTR.

The protein belongs to the FliT family. Homodimer. Interacts with FliD and FlhC.

The protein resides in the cytoplasm. The protein localises to the cytosol. Its function is as follows. Dual-function protein that regulates the transcription of class 2 flagellar operons and that also acts as an export chaperone for the filament-capping protein FliD. As a transcriptional regulator, acts as an anti-FlhDC factor; it directly binds FlhC, thus inhibiting the binding of the FlhC/FlhD complex to class 2 promoters, resulting in decreased expression of class 2 flagellar operons. As a chaperone, effects FliD transition to the membrane by preventing its premature polymerization, and by directing it to the export apparatus. The sequence is that of Flagellar protein FliT from Yersinia pseudotuberculosis serotype IB (strain PB1/+).